The sequence spans 493 residues: MSNKPENLTLITDDGLRLDGRRADEIRPMKIEVGVLSRADGSCYLEWGRNKILVGVFGPREAHPRRSQRADSAVIRYRYNMASFSVEDRARPGPSRRSIEISKVSREAFEPVIMAELFPKTAIDIFVEVLQADAGTRTAAINASSIALADAGIPMKGLITSCAFGKVDGKIVLDLNKEEDNYGEADFPVAMTQDGEITLIQMDGNLTPDEIKQGLELVKKGCKEILEIQQAVLRKKFETPVEEVSEETAPEKGAEKEVLEPSPVAAIVEETPEEAEEPEVEISEEVEAEILASEVIPDFEDELEEEIEEELEESEEDLETEEEEFEEEALEEEAEPEEDLEEDLEEDLGEELEEEEEELEEEEFEEEALEEETELEASLECAPELKEFDEIEARLEKEDASIEAEEEIEPEAEEATEEGLEEEAEIEETAASEEENIEAEAEAEEEAEPEVEAEEISTEAEEAEEEPEEEKSEGPWKVVKDPSEAGTRGEKDE.

2 disordered regions span residues 244 to 264 (VSEETAPEKGAEKEVLEPSPV) and 291 to 493 (LASE…EKDE). Residues 249 to 259 (APEKGAEKEVL) show a composition bias toward basic and acidic residues. Over residues 297–377 (PDFEDELEEE…ALEEETELEA (81 aa)) the composition is skewed to acidic residues. Basic and acidic residues predominate over residues 383-400 (PELKEFDEIEARLEKEDA). Acidic residues predominate over residues 401 to 471 (SIEAEEEIEP…EAEEEPEEEK (71 aa)). Residues 472-493 (SEGPWKVVKDPSEAGTRGEKDE) show a composition bias toward basic and acidic residues.

This sequence belongs to the RNase PH family. Rrp41 subfamily. As to quaternary structure, component of the archaeal exosome complex. Forms a hexameric ring-like arrangement composed of 3 Rrp41-Rrp42 heterodimers. The hexameric ring associates with a trimer of Rrp4 and/or Csl4 subunits.

It localises to the cytoplasm. Functionally, catalytic component of the exosome, which is a complex involved in RNA degradation. Has 3'-&gt;5' exoribonuclease activity. Can also synthesize heteromeric RNA-tails. The polypeptide is Exosome complex component Rrp41 (Methanosarcina mazei (strain ATCC BAA-159 / DSM 3647 / Goe1 / Go1 / JCM 11833 / OCM 88) (Methanosarcina frisia)).